A 717-amino-acid polypeptide reads, in one-letter code: Ribosomal RNA large subunit methyltransferase K/L (717 aa).

A THUMP domain is found at 43–154 (IGYKACLWSR…KGKANITLDL (112 aa)).

Belongs to the methyltransferase superfamily. RlmKL family.

Its subcellular location is the cytoplasm. The enzyme catalyses guanosine(2445) in 23S rRNA + S-adenosyl-L-methionine = N(2)-methylguanosine(2445) in 23S rRNA + S-adenosyl-L-homocysteine + H(+). It catalyses the reaction guanosine(2069) in 23S rRNA + S-adenosyl-L-methionine = N(2)-methylguanosine(2069) in 23S rRNA + S-adenosyl-L-homocysteine + H(+). Functionally, specifically methylates the guanine in position 2445 (m2G2445) and the guanine in position 2069 (m7G2069) of 23S rRNA. This chain is Ribosomal RNA large subunit methyltransferase K/L, found in Aeromonas hydrophila subsp. hydrophila (strain ATCC 7966 / DSM 30187 / BCRC 13018 / CCUG 14551 / JCM 1027 / KCTC 2358 / NCIMB 9240 / NCTC 8049).